A 238-amino-acid chain; its full sequence is Tetraspanin-8 (238 aa).

At 1-9 (MAGVNVCIK) the chain is on the cytoplasmic side. Residues 10 to 33 (CSMFIFNFVFWLCGAIILSVAISI) form a helical membrane-spanning segment. Over 34–57 (RAGKIGQEILAPGDADLNLFIAVN) the chain is Extracellular. A helical membrane pass occupies residues 58-72 (ILIFVGAVIMILGFL). Topologically, residues 73–83 (GCCGAMKENQF) are cytoplasmic. The chain crosses the membrane as a helical span at residues 84–109 (MMILFFVGLLMILLLQVAAGIVATTR). At 110–206 (KSKTEQALNK…ASISQMFSKR (97 aa)) the chain is on the extracellular side. Asn118 carries N-linked (GlcNAc...) asparagine glycosylation. The chain crosses the membrane as a helical span at residues 207 to 231 (LFIVLALAFGLAAIEVLGLIFSIVL). Topologically, residues 232-238 (YCQMRKK) are cytoplasmic.

It belongs to the tetraspanin (TM4SF) family. As to quaternary structure, forms homooligomers. Interacts with MEP1B. Interacts with integrin alpha3/ITGA3. Interacts with RICTOR and MTOR. Interacts with ADAM17. Interacts with ECE1.

Its subcellular location is the cell membrane. In terms of biological role, structural component of specialized membrane microdomains known as tetraspanin-enriched microdomains (TERMs), which act as platforms for receptor clustering and signaling. Participates thereby in diverse biological functions such as cell signal transduction, migration and protein trafficking. Promotes ADAM17-mediated TNF-alpha processing through recruitment of ADAM17 to tetraspanin-enriched micro-domains (TEMs). Forms a complex with RICTOR and integrin alpha3/ITGA3 to mediate mTORC2 activation and AKT1 phosphorylation leading to cell migration. Reduces apoptosis and autophagy induced by high glucose levels through forming a complex with mTOR and RICTOR. Contributes to the maintenance of intestinal epithelial barrier and plays a role in the regulation of intestine inflammation by switching interferon gamma receptor 1/IFNGR1 from clathrin-dependent to lipid raft-dependent endocytosis route to limit STAT1 activation magnitude and duration. Acts as a modulator of the endothelin axis by associating with endothelin converting enzyme ECE1 and regulating its activity of conversion of the endothelin-1 precursor to endothelin. The protein is Tetraspanin-8 (TSPAN8) of Bos taurus (Bovine).